Here is a 179-residue protein sequence, read N- to C-terminus: Peptidyl-prolyl cis-trans isomerase H (179 aa).

The 163-residue stretch at 16 to 178 (FFDISIGDTP…LQVRIAECGE (163 aa)) folds into the PPIase cyclophilin-type domain.

This sequence belongs to the cyclophilin-type PPIase family. PPIase H subfamily.

The protein resides in the nucleus. It catalyses the reaction [protein]-peptidylproline (omega=180) = [protein]-peptidylproline (omega=0). In terms of biological role, PPIases accelerate the folding of proteins. It catalyzes the cis-trans isomerization of proline imidic peptide bonds in oligopeptides. The protein is Peptidyl-prolyl cis-trans isomerase H (CYP3) of Cryptococcus neoformans var. neoformans serotype D (strain B-3501A) (Filobasidiella neoformans).